The sequence spans 224 residues: Lipoprotein-releasing system ATP-binding protein LolD (224 aa).

An ABC transporter domain is found at L6–I224. ATP is bound at residue G43–T50.

This sequence belongs to the ABC transporter superfamily. Lipoprotein translocase (TC 3.A.1.125) family. In terms of assembly, the complex is composed of two ATP-binding proteins (LolD) and two transmembrane proteins (LolC and LolE).

Its subcellular location is the cell inner membrane. Part of the ABC transporter complex LolCDE involved in the translocation of mature outer membrane-directed lipoproteins, from the inner membrane to the periplasmic chaperone, LolA. Responsible for the formation of the LolA-lipoprotein complex in an ATP-dependent manner. This Neorickettsia sennetsu (strain ATCC VR-367 / Miyayama) (Ehrlichia sennetsu) protein is Lipoprotein-releasing system ATP-binding protein LolD.